Here is a 342-residue protein sequence, read N- to C-terminus: uncharacterized protein (342 aa).

Belongs to the cycloisomerase 2 family.

This is an uncharacterized protein from Staphylococcus aureus (strain N315).